The sequence spans 160 residues: Cytochrome b6-f complex subunit 4 (160 aa).

3 consecutive transmembrane segments (helical) span residues 36-56 (LLYIFPVCILGTIACCIGLGV), 95-115 (LLGVLSMAAVPIGLITVPFIE), and 131-151 (LVFLFGTFTAFWLGIGATMPI).

It belongs to the cytochrome b family. PetD subfamily. As to quaternary structure, the 4 large subunits of the cytochrome b6-f complex are cytochrome b6, subunit IV (17 kDa polypeptide, petD), cytochrome f and the Rieske protein, while the 4 small subunits are petG, petL, petM and petN. The complex functions as a dimer.

It localises to the plastid. It is found in the chloroplast thylakoid membrane. Component of the cytochrome b6-f complex, which mediates electron transfer between photosystem II (PSII) and photosystem I (PSI), cyclic electron flow around PSI, and state transitions. This Emiliania huxleyi (Coccolithophore) protein is Cytochrome b6-f complex subunit 4.